Consider the following 270-residue polypeptide: Calpain small subunit 1 (270 aa).

Met-1 is subject to N-acetylmethionine. At Ser-6 the chain carries Phosphoserine. In terms of domain architecture, EF-hand 1; atypical spans 98-132 (EEERQFRKLFVQLAGDDMEVSATELMNILNKVVTR). Ala-111, Asp-114, Glu-116, Glu-121, Asp-139, Asp-154, Asp-156, Thr-158, Lys-160, and Glu-165 together coordinate Ca(2+). 4 consecutive EF-hand domains span residues 141–174 (FGIDTCRSMVAVMDSDTTGKLGFEEFKYLWNNIK), 171–206 (NNIKKWQGIYKRFDTDRSGTIGSNELPGAFEAAGFH), 207–235 (LNQHIYSMIIRRYSDETGNMDFDNFISCL), and 236–270 (VRLDAMFRAFRSLDKNGTGQIQVNIQEWLQLTMYS). Lys-181 carries the N6-acetyllysine modification. Residues Asp-184, Asp-186, Ser-188, Thr-190, Glu-195, and Asp-227 each contribute to the Ca(2+) site.

As to quaternary structure, homodimer or heterodimer of a large (catalytic) and a small (regulatory) subunit. In presence of calcium, the heterodimer dissociates.

The protein resides in the cytoplasm. Its subcellular location is the cell membrane. Its function is as follows. Regulatory subunit of the calcium-regulated non-lysosomal thiol-protease which catalyzes limited proteolysis of substrates involved in cytoskeletal remodeling and signal transduction. Essential for embryonic development. The chain is Calpain small subunit 1 (Capns1) from Rattus norvegicus (Rat).